A 64-amino-acid chain; its full sequence is Translation machinery-associated protein 7 (64 aa).

Disordered stretches follow at residues 1–38 and 45–64; these read MSSR…ADAA and ANMK…SGKK. Basic and acidic residues predominate over residues 27–38; the sequence is IAFKEKQKADAA. Residues 53–64 show a composition bias toward gly residues; sequence LVGGGIKKSGKK.

It belongs to the TMA7 family. Interacts with the 40S ribosomal subunit.

The protein resides in the cytoplasm. The protein localises to the nucleus. In terms of biological role, involved in protein synthesis. In Saccharomyces cerevisiae (strain ATCC 204508 / S288c) (Baker's yeast), this protein is Translation machinery-associated protein 7 (TMA7).